We begin with the raw amino-acid sequence, 123 residues long: UPF0102 protein Pcar_2217 (123 aa).

It belongs to the UPF0102 family.

The protein is UPF0102 protein Pcar_2217 of Syntrophotalea carbinolica (strain DSM 2380 / NBRC 103641 / GraBd1) (Pelobacter carbinolicus).